The sequence spans 286 residues: KH domain-containing protein At2g38610 (286 aa).

An N-acetylserine modification is found at S2. Residues 141 to 208 enclose the KH domain; sequence EIPVDNYPNF…EHLNEQLHIL (68 aa). The segment at 256-286 is disordered; the sequence is SNNLREESPGPSGGGSVSPFNSSGKRPKTGC. A phosphoserine mark is found at S263 and S273.

It localises to the nucleus. In Arabidopsis thaliana (Mouse-ear cress), this protein is KH domain-containing protein At2g38610.